The sequence spans 484 residues: UDP-N-acetylmuramate--L-alanine ligase (484 aa).

126-132 (GTHGKTT) provides a ligand contact to ATP.

Belongs to the MurCDEF family.

The protein localises to the cytoplasm. It carries out the reaction UDP-N-acetyl-alpha-D-muramate + L-alanine + ATP = UDP-N-acetyl-alpha-D-muramoyl-L-alanine + ADP + phosphate + H(+). It participates in cell wall biogenesis; peptidoglycan biosynthesis. Cell wall formation. This is UDP-N-acetylmuramate--L-alanine ligase from Tolumonas auensis (strain DSM 9187 / NBRC 110442 / TA 4).